The chain runs to 1567 residues: Transmembrane protein 131 homolog (1567 aa).

The signal sequence occupies residues 1–32; sequence MPTQVQMRPLLRIFAEPILLILIFLFTLGAKG. At 33–1049 the chain is on the lumenal side; that stretch reads EKVLQETFLG…RPGWESSLKN (1017 aa). Positions 55 to 228 are papD-L domain; sequence RLVPSRLDFG…TLKPVIRISF (174 aa). N-linked (GlcNAc...) asparagine glycosylation is found at Asn-84, Asn-114, Asn-168, Asn-235, Asn-316, Asn-317, Asn-342, Asn-372, Asn-409, Asn-462, Asn-563, Asn-890, and Asn-1013. The chain crosses the membrane as a helical span at residues 1050–1070; sequence AALVVLLASFGLVLVAAVFDA. Over 1071–1567 the chain is Cytoplasmic; that stretch reads KAIMVQQNAY…SQRNNHNHMN (497 aa). A coiled-coil region spans residues 1096 to 1130; sequence RNIVKLQAEEAAAKAESVQQQQKVKNGQLKELRKR. Disordered regions lie at residues 1112–1337, 1364–1386, and 1502–1567; these read SVQQ…SPDA, PTDNGFDWNHATSSSDLGPIGDN, and PGLE…NHMN. Composition is skewed to low complexity over residues 1132 to 1150 and 1166 to 1183; these read VVNSTNSKSKSKSSWSPWS and KTVVSTPVTPPAASAPAA. A phosphoserine mark is found at Ser-1201 and Ser-1258. Polar residues predominate over residues 1247-1259; it reads AKSSPPQQENISP. A compositionally biased stretch (basic and acidic residues) spans 1284–1298; sequence PGRERERERRSKDQK. Residues 1319–1331 show a composition bias toward polar residues; that stretch reads KLNFGQTTNSTSP. Polar residues-rich tracts occupy residues 1507-1519 and 1536-1561; these read SARQTHNLAQEQV and LPTQYDPFTSPSSIWSDTWRQSSQRN.

It belongs to the TMEM131 family. In terms of assembly, may interact (via PapD-L domain) with collagen proteins (via C-terminus); the interaction is direct and is involved in assembly and TRAPPIII ER-to-Golgi transport complex-dependent secretion of collagen.

The protein localises to the membrane. Collagen binding transmembrane protein involved in collagen secretion, probably by recruiting the ER-to-Golgi transport complex TRAPPIII. The sequence is that of Transmembrane protein 131 homolog from Drosophila melanogaster (Fruit fly).